The following is a 499-amino-acid chain: MASTTTCTRFTDEYQLFEELGKGAFSVVRRCMKIPTGQEYAAKIINTKKLSARDHQKLEREARICRLLKHPNIVRLHDSISEEGFHYLVFDLVTGGELFEDIVAREYYSEADASHCIQQILESVNHCHLNGIVHRDLKPENLLLASKSKGAAVKLADFGLAIEVQGDQQAWFGFAGTPGYLSPEVLRKDPYGKPVDMWACGVILYILLVGYPPFWDEDQHRLYQQIKAGAYDFPSPEWDTVTPEAKDLINKMLTINPAKRITASEALKHPWICQRSTVASMMHRQETVDCLKKFNARRKLKGAILTTMLATRNFSAAKSLLKKPDGVKESTESSNTTIEDEDVKARKQEIIKVTEQLIEAINNGDFEAYTKICDPGLTAFEPEALGNLVEGMDFHRFYFENALSKSNKPIHTIILNPHVHLVGDDAACIAYIRLTQYMDGSGMPKTMQSEETRVWHRRDGKWQNVHFHRSGSPTVPIKPPCIPNGKENFSGGTSLWQNI.

A2 carries the N-acetylalanine modification. In terms of domain architecture, Protein kinase spans 14 to 272; that stretch reads YQLFEELGKG…ASEALKHPWI (259 aa). Residues 20 to 28 and K43 each bind ATP; that span reads LGKGAFSVV. Catalysis depends on D136, which acts as the Proton acceptor. The interval 283 to 292 is autoinhibitory domain; it reads HRQETVDCLK. Position 287 is a phosphothreonine; by autocatalysis (T287). The tract at residues 291 to 301 is calmodulin-binding; sequence LKKFNARRKLK. Phosphothreonine; by autocatalysis occurs at positions 306 and 307. S315 carries the phosphoserine modification. N6-acetyllysine is present on K318. 2 positions are modified to phosphoserine: S319 and S330. T331 is modified (phosphothreonine). A Phosphoserine modification is found at S333. T336 and T337 each carry phosphothreonine. A phosphoserine mark is found at S404, S490, and S494.

The protein belongs to the protein kinase superfamily. CAMK Ser/Thr protein kinase family. CaMK subfamily. CAMK2 is composed of 4 different chains: alpha (CAMK2A), beta (CAMK2B), gamma (CAMK2G), and delta (CAMK2D). The different isoforms assemble into homo- or heteromultimeric holoenzymes composed of 12 subunits with two hexameric rings stacked one on top of the other. Interacts with RRAD and CACNB2. In terms of processing, autophosphorylation of Thr-287 following activation by Ca(2+)/calmodulin. Phosphorylation of Thr-287 locks the kinase into an activated state. As to expression, expressed in cardiac muscle and skeletal muscle. Isoform Delta 3, isoform Delta 2, isoform Delta 8 and isoform Delta 9 are expressed in cardiac muscle. Isoform Delta 11 is expressed in skeletal muscle.

Its subcellular location is the cell membrane. The protein localises to the sarcolemma. It localises to the sarcoplasmic reticulum membrane. The enzyme catalyses L-seryl-[protein] + ATP = O-phospho-L-seryl-[protein] + ADP + H(+). It catalyses the reaction L-threonyl-[protein] + ATP = O-phospho-L-threonyl-[protein] + ADP + H(+). With respect to regulation, activated by Ca(2+)/calmodulin. Binding of calmodulin results in conformational change that relieves intrasteric autoinhibition and allows autophosphorylation of Thr-287 which turns the kinase in a constitutively active form and confers to the kinase a Ca(2+)-independent activity. Functionally, calcium/calmodulin-dependent protein kinase involved in the regulation of Ca(2+) homeostatis and excitation-contraction coupling (ECC) in heart by targeting ion channels, transporters and accessory proteins involved in Ca(2+) influx into the myocyte, Ca(2+) release from the sarcoplasmic reticulum (SR), SR Ca(2+) uptake and Na(+) and K(+) channel transport. Targets also transcription factors and signaling molecules to regulate heart function. In its activated form, is involved in the pathogenesis of dilated cardiomyopathy and heart failure. Contributes to cardiac decompensation and heart failure by regulating SR Ca(2+) release via direct phosphorylation of RYR2 Ca(2+) channel on 'Ser-2808'. In the nucleus, phosphorylates the MEF2 repressor HDAC4, promoting its nuclear export and binding to 14-3-3 protein, and expression of MEF2 and genes involved in the hypertrophic program. Is essential for left ventricular remodeling responses to myocardial infarction. In pathological myocardial remodeling acts downstream of the beta adrenergic receptor signaling cascade to regulate key proteins involved in ECC. Regulates Ca(2+) influx to myocytes by binding and phosphorylating the L-type Ca(2+) channel subunit beta-2 CACNB2. In addition to Ca(2+) channels, can target and regulate the cardiac sarcolemmal Na(+) channel Nav1.5/SCN5A and the K+ channel Kv4.3/KCND3, which contribute to arrhythmogenesis in heart failure. Phosphorylates phospholamban (PLN/PLB), an endogenous inhibitor of SERCA2A/ATP2A2, contributing to the enhancement of SR Ca(2+) uptake that may be important in frequency-dependent acceleration of relaxation (FDAR) and maintenance of contractile function during acidosis. May participate in the modulation of skeletal muscle function in response to exercise, by regulating SR Ca(2+) transport through phosphorylation of PLN/PLB and triadin, a ryanodine receptor-coupling factor. In response to interferon-gamma (IFN-gamma) stimulation, catalyzes phosphorylation of STAT1, stimulating the JAK-STAT signaling pathway. This chain is Calcium/calmodulin-dependent protein kinase type II subunit delta (CAMK2D), found in Homo sapiens (Human).